Consider the following 309-residue polypeptide: Aspartate carbamoyltransferase catalytic subunit (309 aa).

2 residues coordinate carbamoyl phosphate: arginine 55 and threonine 56. Lysine 85 serves as a coordination point for L-aspartate. Positions 106, 135, and 138 each coordinate carbamoyl phosphate. Residues arginine 168 and arginine 230 each contribute to the L-aspartate site. Residues leucine 268 and proline 269 each coordinate carbamoyl phosphate.

The protein belongs to the aspartate/ornithine carbamoyltransferase superfamily. ATCase family. In terms of assembly, heterododecamer (2C3:3R2) of six catalytic PyrB chains organized as two trimers (C3), and six regulatory PyrI chains organized as three dimers (R2).

The enzyme catalyses carbamoyl phosphate + L-aspartate = N-carbamoyl-L-aspartate + phosphate + H(+). It participates in pyrimidine metabolism; UMP biosynthesis via de novo pathway; (S)-dihydroorotate from bicarbonate: step 2/3. Catalyzes the condensation of carbamoyl phosphate and aspartate to form carbamoyl aspartate and inorganic phosphate, the committed step in the de novo pyrimidine nucleotide biosynthesis pathway. The protein is Aspartate carbamoyltransferase catalytic subunit of Vibrio vulnificus (strain CMCP6).